Consider the following 170-residue polypeptide: Cathelicidin antimicrobial peptide (170 aa).

Residues 1–30 (MKTQRDSPSLGRWSLVLLLLGLVMPLAIVA) form the signal peptide. Positions 31–131 (QVLSYQEAVL…DISCDKDNRR (101 aa)) are cleaved as a propeptide — cathelin-like domain (CLD). 2 cysteine pairs are disulfide-bonded: Cys86–Cys97 and Cys108–Cys125. Residues 150–162 (FKRIVQRIKDFLQ) are active core.

This sequence belongs to the cathelicidin family. Monomer, homodimer or homotrimer (in vitro). Oligomerizes as tetra- or hexamer in solution (in vitro). Post-translationally, proteolytically cleaved by proteinase PRTN3 into antibacterial peptide LL-37. Proteolytically cleaved by cathepsin CTSG and neutrophil elastase ELANE. Resistant to proteolytic degradation in solution, and when bound to both zwitterionic (mimicking mammalian membranes) and negatively charged membranes (mimicking bacterial membranes). In terms of processing, after secretion onto the skin surface, the CAMP gene product is processed by a serine protease-dependent mechanism into multiple novel antimicrobial peptides distinct from and shorter than cathelicidin LL-37. These peptides show enhanced antimicrobial action, acquiring the ability to kill skin pathogens such as S.aureus, E.coli and C.albicans. These peptides have lost the ability to stimulate CXCL8/IL8 release from keratinocytes. The peptides act synergistically, killing bacteria at lower concentrations when present together, and maintain activity at increased salt condition.

The protein resides in the secreted. The protein localises to the vesicle. Its function is as follows. Antimicrobial protein that is an integral component of the innate immune system. Binds to bacterial lipopolysaccharides (LPS). Acts via neutrophil N-formyl peptide receptors to enhance the release of CXCL2. Postsecretory processing generates multiple cathelicidin antimicrobial peptides with various lengths which act as a topical antimicrobial defense in sweat on skin. The unprocessed precursor form, cathelicidin antimicrobial peptide, inhibits the growth of Gram-negative E.coli and E.aerogenes with efficiencies comparable to that of the mature peptide LL-37 (in vitro). In terms of biological role, antimicrobial peptide that is an integral component of the innate immune system. Binds to bacterial lipopolysaccharides (LPS). Causes membrane permeabilization by forming transmembrane pores (in vitro). Causes lysis of E.coli. Exhibits antimicrobial activity against Gram-negative bacteria such as P.aeruginosa, S.typhimurium, E.aerogenes, E.coli and P.syringae, Gram-positive bacteria such as L.monocytogenes, S.epidermidis, S.pyogenes and S.aureus, as well as vancomycin-resistant enterococci (in vitro). Exhibits antimicrobial activity against methicillin-resistant S.aureus, P.mirabilis, and C.albicans in low-salt media, but not in media containing 100 mM NaCl (in vitro). Forms chiral supramolecular assemblies with quinolone signal (PQS) molecules of P.aeruginosa, which may lead to interference of bacterial quorum signaling and perturbance of bacterial biofilm formation. May form supramolecular fiber-like assemblies on bacterial membranes. Induces cytokine and chemokine producation as well as TNF/TNFA and CSF2/GMCSF production in normal human keratinocytes. Exhibits hemolytic activity against red blood cells. Exhibits antimicrobial activity against E.coli and B.megaterium (in vitro). The chain is Cathelicidin antimicrobial peptide from Nomascus gabriellae (Red-cheeked gibbon).